Reading from the N-terminus, the 182-residue chain is Large ribosomal subunit protein bL25 (182 aa).

Belongs to the bacterial ribosomal protein bL25 family. CTC subfamily. In terms of assembly, part of the 50S ribosomal subunit; part of the 5S rRNA/L5/L18/L25 subcomplex. Contacts the 5S rRNA. Binds to the 5S rRNA independently of L5 and L18.

Functionally, this is one of the proteins that binds to the 5S RNA in the ribosome where it forms part of the central protuberance. The polypeptide is Large ribosomal subunit protein bL25 (Borrelia garinii subsp. bavariensis (strain ATCC BAA-2496 / DSM 23469 / PBi) (Borreliella bavariensis)).